A 146-amino-acid polypeptide reads, in one-letter code: Large ribosomal subunit protein uL13 (146 aa).

It belongs to the universal ribosomal protein uL13 family. As to quaternary structure, part of the 50S ribosomal subunit.

This protein is one of the early assembly proteins of the 50S ribosomal subunit, although it is not seen to bind rRNA by itself. It is important during the early stages of 50S assembly. This is Large ribosomal subunit protein uL13 from Mycoplasma pneumoniae (strain ATCC 29342 / M129 / Subtype 1) (Mycoplasmoides pneumoniae).